Here is a 444-residue protein sequence, read N- to C-terminus: UDP-N-acetylmuramoylalanine--D-glutamate ligase (444 aa).

An ATP-binding site is contributed by glycine 109–threonine 115.

Belongs to the MurCDEF family.

It localises to the cytoplasm. The enzyme catalyses UDP-N-acetyl-alpha-D-muramoyl-L-alanine + D-glutamate + ATP = UDP-N-acetyl-alpha-D-muramoyl-L-alanyl-D-glutamate + ADP + phosphate + H(+). It functions in the pathway cell wall biogenesis; peptidoglycan biosynthesis. Cell wall formation. Catalyzes the addition of glutamate to the nucleotide precursor UDP-N-acetylmuramoyl-L-alanine (UMA). The polypeptide is UDP-N-acetylmuramoylalanine--D-glutamate ligase (Bacteroides thetaiotaomicron (strain ATCC 29148 / DSM 2079 / JCM 5827 / CCUG 10774 / NCTC 10582 / VPI-5482 / E50)).